The primary structure comprises 353 residues: Uroporphyrinogen decarboxylase (353 aa).

Substrate-binding positions include Arg30–Arg34, Asp79, Tyr154, Ser209, and His332.

Belongs to the uroporphyrinogen decarboxylase family. Homodimer.

It localises to the cytoplasm. It catalyses the reaction uroporphyrinogen III + 4 H(+) = coproporphyrinogen III + 4 CO2. It functions in the pathway porphyrin-containing compound metabolism; protoporphyrin-IX biosynthesis; coproporphyrinogen-III from 5-aminolevulinate: step 4/4. Catalyzes the decarboxylation of four acetate groups of uroporphyrinogen-III to yield coproporphyrinogen-III. The chain is Uroporphyrinogen decarboxylase from Mycolicibacterium smegmatis (strain ATCC 700084 / mc(2)155) (Mycobacterium smegmatis).